The following is a 255-amino-acid chain: Pimeloyl-[acyl-carrier protein] methyl ester esterase (255 aa).

Residues 16–242 form the AB hydrolase-1 domain; sequence LVLLHGWGLN…AAHAPFISHP (227 aa). Residues W22, 82–83, and 143–147 contribute to the substrate site; these read SL and FLALQ. S82 serves as the catalytic Nucleophile. Catalysis depends on residues D207 and H235. H235 is a substrate binding site.

Belongs to the AB hydrolase superfamily. Carboxylesterase BioH family. In terms of assembly, monomer.

It localises to the cytoplasm. It carries out the reaction 6-carboxyhexanoyl-[ACP] methyl ester + H2O = 6-carboxyhexanoyl-[ACP] + methanol + H(+). It functions in the pathway cofactor biosynthesis; biotin biosynthesis. The physiological role of BioH is to remove the methyl group introduced by BioC when the pimeloyl moiety is complete. It allows to synthesize pimeloyl-ACP via the fatty acid synthetic pathway through the hydrolysis of the ester bonds of pimeloyl-ACP esters. This Pectobacterium atrosepticum (strain SCRI 1043 / ATCC BAA-672) (Erwinia carotovora subsp. atroseptica) protein is Pimeloyl-[acyl-carrier protein] methyl ester esterase.